Reading from the N-terminus, the 337-residue chain is DNA-directed RNA polymerase subunit alpha (337 aa).

The segment at methionine 1–glutamine 233 is alpha N-terminal domain (alpha-NTD). The tract at residues isoleucine 267–phenylalanine 337 is alpha C-terminal domain (alpha-CTD).

Belongs to the RNA polymerase alpha chain family. As to quaternary structure, in plastids the minimal PEP RNA polymerase catalytic core is composed of four subunits: alpha, beta, beta', and beta''. When a (nuclear-encoded) sigma factor is associated with the core the holoenzyme is formed, which can initiate transcription.

The protein resides in the plastid. Its subcellular location is the chloroplast. It carries out the reaction RNA(n) + a ribonucleoside 5'-triphosphate = RNA(n+1) + diphosphate. Its function is as follows. DNA-dependent RNA polymerase catalyzes the transcription of DNA into RNA using the four ribonucleoside triphosphates as substrates. This chain is DNA-directed RNA polymerase subunit alpha, found in Platanus occidentalis (Sycamore).